We begin with the raw amino-acid sequence, 451 residues long: uncharacterized protein (451 aa).

Positions 1 to 451 are disordered; it reads MSETENKTTT…KKEAAKNKSK (451 aa). The span at 9 to 22 shows a compositional bias: low complexity; it reads TTETPTTTDSTVTT. The segment covering 44 to 54 has biased composition (polar residues); sequence VKNQLSNTRTR. A compositionally biased stretch (basic and acidic residues) spans 73 to 99; the sequence is KLIDTKERKEKKEKKEKEPKEPKEPKE. The span at 114 to 147 shows a compositional bias: acidic residues; that stretch reads GDEEEDEEKEEDEEQKEEQSQEEDSEESEEEQNS. Basic residues predominate over residues 152–162; that stretch reads KKKKKQAKKVA. Composition is skewed to basic and acidic residues over residues 163-192, 199-210, and 217-230; these read KKET…EKEA, STEKKEKEEKPK, and KKDQ…KDGD. The segment covering 232-244 has biased composition (low complexity); sequence STTTTATATTTTD. Composition is skewed to basic and acidic residues over residues 284-303 and 311-340; these read TEEK…ETKK and AAAE…DDKP. Residues 341 to 355 show a composition bias toward low complexity; sequence AATTTTTTAAAATTT. Positions 356-383 are enriched in basic and acidic residues; it reads EEPKEKITKPAADKKKAPANKKAEKDQS. The span at 393-425 shows a compositional bias: low complexity; that stretch reads TTTATTTTTNKDATAPTTTTNKDATAPTTTTTK. Over residues 441–451 the composition is skewed to basic and acidic residues; the sequence is PKKEAAKNKSK.

This is an uncharacterized protein from Dictyostelium discoideum (Social amoeba).